Reading from the N-terminus, the 231-residue chain is Probable septum site-determining protein MinC (231 aa).

Residues lysine 102–threonine 125 form a disordered region.

This sequence belongs to the MinC family. Interacts with MinD and FtsZ.

Its function is as follows. Cell division inhibitor that blocks the formation of polar Z ring septums. Rapidly oscillates between the poles of the cell to destabilize FtsZ filaments that have formed before they mature into polar Z rings. Prevents FtsZ polymerization. The protein is Probable septum site-determining protein MinC of Escherichia coli O6:K15:H31 (strain 536 / UPEC).